Reading from the N-terminus, the 944-residue chain is Serine/threonine-protein kinase PLK4 (944 aa).

The Protein kinase domain maps to 12 to 265 (FKVLNLLGKG…LSSVLDHAFM (254 aa)). Residues 18–26 (LGKGSFACV) and K41 contribute to the ATP site. D136 serves as the catalytic Proton acceptor. Disordered stretches follow at residues 327 to 396 (KDKH…YSER), 432 to 463 (RSLE…RSND), and 530 to 561 (LGIK…QQAF). Positions 378-394 (RSGTSQSQTYAKPSSYS) are enriched in polar residues. A compositionally biased stretch (basic and acidic residues) spans 432 to 447 (RSLERHTSPPVKEKTP). Over residues 548–561 (FGEQSKSRVPQQAF) the composition is skewed to polar residues. Residues 565–678 (TLRSIISPLN…AKFIKLVRSK (114 aa)) enclose the Cryptic POLO box 1 (CPB1) domain. Residues 679-791 (TPKVTYYTRY…GRRPALAESP (113 aa)) enclose the Cryptic POLO box 2 (CPB2) domain. The tract at residues 786 to 809 (ALAESPKTQPTPSVDSARERKEEQ) is disordered. In terms of domain architecture, POLO box spans 862–940 (QVLKSVFVEN…LSSILMLFAS (79 aa)).

Belongs to the protein kinase superfamily. Ser/Thr protein kinase family. CDC5/Polo subfamily. Homodimer. In terms of processing, ubiquitinated; leading to its degradation by the proteasome.

The protein localises to the cytoplasm. Its subcellular location is the cytoskeleton. It localises to the microtubule organizing center. It is found in the centrosome. The protein resides in the centriole. It carries out the reaction L-seryl-[protein] + ATP = O-phospho-L-seryl-[protein] + ADP + H(+). The catalysed reaction is L-threonyl-[protein] + ATP = O-phospho-L-threonyl-[protein] + ADP + H(+). In terms of biological role, serine/threonine-protein kinase that plays a central role in centriole duplication. Able to trigger procentriole formation on the surface of the parental centriole cylinder, leading to the recruitment of centriole biogenesis proteins such as sass6, cpap, ccp110, cep135 and gamma-tubulin. When overexpressed, it is able to induce centrosome amplification through the simultaneous generation of multiple procentrioles adjoining each parental centriole during S phase. Its central role in centriole replication suggests a possible role in tumorigenesis, centrosome aberrations being frequently observed in tumors. Also involved in deuterosome-mediated centriole amplification in multiciliated that can generate more than 100 centrioles. The chain is Serine/threonine-protein kinase PLK4 from Xenopus laevis (African clawed frog).